A 420-amino-acid chain; its full sequence is Tyrosine--tRNA ligase (420 aa).

Tyr-38 contributes to the L-tyrosine binding site. The 'HIGH' region signature appears at 43-52; it reads PTGDSLHIGH. Residues Tyr-169 and Gln-173 each contribute to the L-tyrosine site. Positions 231-235 match the 'KMSKS' region motif; sequence KFGKS. Lys-234 serves as a coordination point for ATP. Positions 353-419 constitute an S4 RNA-binding domain; sequence KNIVDFLVDT…GKRKYTLVTI (67 aa).

It belongs to the class-I aminoacyl-tRNA synthetase family. TyrS type 1 subfamily. In terms of assembly, homodimer.

It is found in the cytoplasm. The catalysed reaction is tRNA(Tyr) + L-tyrosine + ATP = L-tyrosyl-tRNA(Tyr) + AMP + diphosphate + H(+). In terms of biological role, catalyzes the attachment of tyrosine to tRNA(Tyr) in a two-step reaction: tyrosine is first activated by ATP to form Tyr-AMP and then transferred to the acceptor end of tRNA(Tyr). The polypeptide is Tyrosine--tRNA ligase (Lactobacillus acidophilus (strain ATCC 700396 / NCK56 / N2 / NCFM)).